Here is a 236-residue protein sequence, read N- to C-terminus: Probable apoptosis inhibitor 2 (236 aa).

A BIR repeat occupies 85–150 (RKRSFASFKW…AHAADCAFRR (66 aa)). Zn(2+)-binding residues include C123, C126, H142, and C146. Residues 189 to 223 (CKVCFVNEKSVCFLPCRHLVVCAECSPRCKRCCVC) form an RING-type zinc finger.

In Orgyia pseudotsugata multicapsid polyhedrosis virus (OpMNPV), this protein is Probable apoptosis inhibitor 2 (IAP2).